A 73-amino-acid polypeptide reads, in one-letter code: Large ribosomal subunit protein bL28 (73 aa).

Belongs to the bacterial ribosomal protein bL28 family.

The protein is Large ribosomal subunit protein bL28 of Anaeromyxobacter sp. (strain Fw109-5).